Reading from the N-terminus, the 287-residue chain is Large ribosomal subunit protein uL2 (287 aa).

Positions 221 to 287 (RGSVMNPCDH…SKRSRGGRDS (67 aa)) are disordered. Residues 271 to 287 (LRKRRKTSKRSRGGRDS) show a composition bias toward basic residues.

This sequence belongs to the universal ribosomal protein uL2 family. In terms of assembly, part of the 50S ribosomal subunit. Forms a bridge to the 30S subunit in the 70S ribosome.

Its function is as follows. One of the primary rRNA binding proteins. Required for association of the 30S and 50S subunits to form the 70S ribosome, for tRNA binding and peptide bond formation. It has been suggested to have peptidyltransferase activity; this is somewhat controversial. Makes several contacts with the 16S rRNA in the 70S ribosome. This Synechococcus sp. (strain CC9605) protein is Large ribosomal subunit protein uL2.